Here is a 409-residue protein sequence, read N- to C-terminus: LL-diaminopimelate aminotransferase (409 aa).

Substrate contacts are provided by Tyr15 and Gly42. Pyridoxal 5'-phosphate is bound by residues Tyr72, 108 to 109, Tyr132, Asn187, Tyr218, and 246 to 248; these read SK and SFS. Positions 109, 132, and 187 each coordinate substrate. Lys249 bears the N6-(pyridoxal phosphate)lysine mark. Residues Arg257 and Asn292 each contribute to the pyridoxal 5'-phosphate site. Substrate-binding residues include Asn292 and Arg388.

It belongs to the class-I pyridoxal-phosphate-dependent aminotransferase family. LL-diaminopimelate aminotransferase subfamily. In terms of assembly, homodimer. The cofactor is pyridoxal 5'-phosphate.

It catalyses the reaction (2S,6S)-2,6-diaminopimelate + 2-oxoglutarate = (S)-2,3,4,5-tetrahydrodipicolinate + L-glutamate + H2O + H(+). It participates in amino-acid biosynthesis; L-lysine biosynthesis via DAP pathway; LL-2,6-diaminopimelate from (S)-tetrahydrodipicolinate (aminotransferase route): step 1/1. Its function is as follows. Involved in the synthesis of meso-diaminopimelate (m-DAP or DL-DAP), required for both lysine and peptidoglycan biosynthesis. Catalyzes the direct conversion of tetrahydrodipicolinate to LL-diaminopimelate. The chain is LL-diaminopimelate aminotransferase from Heliobacterium modesticaldum (strain ATCC 51547 / Ice1).